Here is a 258-residue protein sequence, read N- to C-terminus: Transcription factor TT2 (258 aa).

HTH myb-type domains are found at residues 11 to 63 (REEL…KNYL) and 64 to 118 (RPGI…RKRL). 2 consecutive DNA-binding regions (H-T-H motif) follow at residues 39–63 (WSTL…KNYL) and 91–114 (WSLI…NSNL). 47–54 (GLKRCGKS) lines the ATP pocket.

In terms of assembly, interacts with BHLH2/EGL3/MYC146, BHLH12/MYC1 and BHLH42/TT8. In terms of tissue distribution, expressed at a high level in immature siliques and at a lower level in flowers. Undetected in young seedlings, roots, leaves and inflorescence stems.

The protein localises to the nucleus. Functionally, transcription activator, when associated with BHLH2/EGL3/MYC146, BHLH12/MYC1, or BHLH42/TT8. Involved in the control of flavonoid late metabolism in developing siliques. Plays a key role in determining the tissue-specific activation of leucoanthocyanidin reductase (BANYULS). The sequence is that of Transcription factor TT2 (TT2) from Arabidopsis thaliana (Mouse-ear cress).